A 474-amino-acid chain; its full sequence is tRNA-2-methylthio-N(6)-dimethylallyladenosine synthase (474 aa).

One can recognise an MTTase N-terminal domain in the interval lysine 3 to glycine 120. Residues cysteine 12, cysteine 49, cysteine 83, cysteine 157, cysteine 161, and cysteine 164 each coordinate [4Fe-4S] cluster. Residues arginine 143 to glutamine 375 form the Radical SAM core domain. Residues arginine 378–arginine 441 form the TRAM domain.

This sequence belongs to the methylthiotransferase family. MiaB subfamily. Monomer. Requires [4Fe-4S] cluster as cofactor.

It localises to the cytoplasm. It carries out the reaction N(6)-dimethylallyladenosine(37) in tRNA + (sulfur carrier)-SH + AH2 + 2 S-adenosyl-L-methionine = 2-methylsulfanyl-N(6)-dimethylallyladenosine(37) in tRNA + (sulfur carrier)-H + 5'-deoxyadenosine + L-methionine + A + S-adenosyl-L-homocysteine + 2 H(+). Catalyzes the methylthiolation of N6-(dimethylallyl)adenosine (i(6)A), leading to the formation of 2-methylthio-N6-(dimethylallyl)adenosine (ms(2)i(6)A) at position 37 in tRNAs that read codons beginning with uridine. This chain is tRNA-2-methylthio-N(6)-dimethylallyladenosine synthase, found in Serratia proteamaculans (strain 568).